Reading from the N-terminus, the 264-residue chain is MSKVTSSTLLKYKQEGRKFTALTAYDASFASAFDGEGIDVLLVGDSLGMVLQGHDDTLPVTTADIAYHTRCVRRGIERSLLIADMPFMSYATPEQAMENATALMQAGANMVKLEGGHWLLETVTKLTERGIPVCAHLGLTPQSVHVFGGFKVQGRDAENAQRILDEAKALEAAGAQLLVVECIPESLATAITQALTIPVIGIGAGATTDGQILVMHDVLGISSGYIPRFSKNYLKQTGEIRSAVRAYIEEVANGTFPSSEHTFS.

The Mg(2+) site is built by D45 and D84. 3-methyl-2-oxobutanoate contacts are provided by residues 45-46 (DS), D84, and K112. E114 contacts Mg(2+). E181 (proton acceptor) is an active-site residue.

Belongs to the PanB family. In terms of assembly, homodecamer; pentamer of dimers. Mg(2+) is required as a cofactor.

The protein localises to the cytoplasm. The catalysed reaction is 3-methyl-2-oxobutanoate + (6R)-5,10-methylene-5,6,7,8-tetrahydrofolate + H2O = 2-dehydropantoate + (6S)-5,6,7,8-tetrahydrofolate. Its pathway is cofactor biosynthesis; (R)-pantothenate biosynthesis; (R)-pantoate from 3-methyl-2-oxobutanoate: step 1/2. Functionally, catalyzes the reversible reaction in which hydroxymethyl group from 5,10-methylenetetrahydrofolate is transferred onto alpha-ketoisovalerate to form ketopantoate. This Shewanella sp. (strain MR-4) protein is 3-methyl-2-oxobutanoate hydroxymethyltransferase.